Reading from the N-terminus, the 396-residue chain is Methionine import ATP-binding protein MetN 2 (396 aa).

The region spanning 41–280 (VSFELVGKVF…PRHGATRALL (240 aa)) is the ABC transporter domain. 77-84 (GRSGAGKS) is a binding site for ATP.

The protein belongs to the ABC transporter superfamily. Methionine importer (TC 3.A.1.24) family. As to quaternary structure, the complex is composed of two ATP-binding proteins (MetN), two transmembrane proteins (MetI) and a solute-binding protein (MetQ).

The protein localises to the cell inner membrane. The enzyme catalyses L-methionine(out) + ATP + H2O = L-methionine(in) + ADP + phosphate + H(+). It catalyses the reaction D-methionine(out) + ATP + H2O = D-methionine(in) + ADP + phosphate + H(+). Its function is as follows. Part of the ABC transporter complex MetNIQ involved in methionine import. Responsible for energy coupling to the transport system. The polypeptide is Methionine import ATP-binding protein MetN 2 (Burkholderia pseudomallei (strain K96243)).